A 266-amino-acid polypeptide reads, in one-letter code: Hydroxypyruvate/pyruvate aldolase (266 aa).

Residue histidine 48 is the Proton acceptor of the active site. A divalent metal cation-binding residues include glutamate 152 and aspartate 178.

The protein belongs to the HpcH/HpaI aldolase family. A divalent metal cation is required as a cofactor.

The catalysed reaction is D-glyceraldehyde + pyruvate = 2-dehydro-3-deoxy-L-galactonate. It carries out the reaction 2-dehydro-3-deoxy-D-gluconate = D-glyceraldehyde + pyruvate. Its function is as follows. Aldolase which can catalyze in vitro the aldolisation reaction between hydroxypyruvate (HPA) or pyruvate (PA) and D-glyceraldehyde (D-GA). The condensation of pyruvate and D-glyceraldehyde produces 2-dehydro-3-deoxy-L-galactonate as the major product and 2-dehydro-3-deoxy-D-gluconate. Has weak activity with hydroxypyruvate and D-glyceraldehyde. This chain is Hydroxypyruvate/pyruvate aldolase, found in Agrobacterium fabrum (strain C58 / ATCC 33970) (Agrobacterium tumefaciens (strain C58)).